The following is a 1096-amino-acid chain: Adenylate-forming reductase Nps9 (1096 aa).

Residues 39–352 (DDTLTEISFL…TTEFGAPTQL (314 aa)) are adenylation (A) domain. AMP contacts are provided by residues histidine 236, 339–340 (VQ), threonine 344, and 425–428 (IIGR). Positions 569–656 (EWTVSTLEHW…LLADRVAKIA (88 aa)) constitute a Carrier domain. Serine 605 carries the post-translational modification O-(pantetheine 4'-phosphoryl)serine. Residues 716–952 (LTGSTGGLGS…MPAEKVSAAI (237 aa)) form a reductase (R) domain region. Residues 720–723 (TGGL), 807–809 (SAW), tyrosine 880, and lysine 884 each bind NADP(+).

It belongs to the adenylate-forming reductase family.

Functionally, adenylate-forming reductase, a natural product biosynthesis enzyme that resembles non-ribosomal peptide synthetases, yet serves to modify one substrate, rather than to condense two or more building blocks. The A-domain preferentially accepts L-threonine as substrate. The natural product of the enzyme is not yet known. The protein is Adenylate-forming reductase Nps9 of Serpula lacrymans var. lacrymans (strain S7.9) (Dry rot fungus).